The sequence spans 515 residues: Protein translocase subunit SecD (515 aa).

6 helical membrane-spanning segments follow: residues leucine 5–proline 25, lysine 353–tyrosine 373, leucine 375–leucine 395, phenylalanine 398–valine 418, phenylalanine 450–phenylalanine 470, and glycine 477–threonine 497.

Belongs to the SecD/SecF family. SecD subfamily. In terms of assembly, forms a complex with SecF. Part of the essential Sec protein translocation apparatus which comprises SecA, SecYEG and auxiliary proteins SecDF. Other proteins may also be involved.

Its subcellular location is the cell inner membrane. Functionally, part of the Sec protein translocase complex. Interacts with the SecYEG preprotein conducting channel. SecDF uses the proton motive force (PMF) to complete protein translocation after the ATP-dependent function of SecA. The protein is Protein translocase subunit SecD of Desulfurispirillum indicum (strain ATCC BAA-1389 / DSM 22839 / S5).